The chain runs to 290 residues: Glutamate racemase (290 aa).

Substrate is bound by residues 24–25 and 56–57; these read DS and YG. Cys87 serves as the catalytic Proton donor/acceptor. 88–89 provides a ligand contact to substrate; the sequence is NT. Catalysis depends on Cys199, which acts as the Proton donor/acceptor. 200-201 is a binding site for substrate; sequence TH. The disordered stretch occupies residues 271–290; it reads GADGASLPDPPSPRIELTTT.

Belongs to the aspartate/glutamate racemases family.

The enzyme catalyses L-glutamate = D-glutamate. It functions in the pathway cell wall biogenesis; peptidoglycan biosynthesis. Functionally, provides the (R)-glutamate required for cell wall biosynthesis. This Deinococcus radiodurans (strain ATCC 13939 / DSM 20539 / JCM 16871 / CCUG 27074 / LMG 4051 / NBRC 15346 / NCIMB 9279 / VKM B-1422 / R1) protein is Glutamate racemase.